We begin with the raw amino-acid sequence, 503 residues long: Aromatase (503 aa).

The next 3 membrane-spanning stretches (helical) occupy residues 19 to 39 (EVMPVATMPILLLTGFLLLVW), 51 to 71 (GYCMGIGPLISHCRFLWMGIG), and 303 to 323 (MLIAAPDTMSVSVFFMLFLIA). Residues Asp-309 and Met-374 each coordinate substrate. Cys-437 contributes to the heme binding site.

This sequence belongs to the cytochrome P450 family. Heme serves as cofactor.

Its subcellular location is the endoplasmic reticulum membrane. The protein localises to the microsome membrane. The catalysed reaction is testosterone + 3 reduced [NADPH--hemoprotein reductase] + 3 O2 = 17beta-estradiol + formate + 3 oxidized [NADPH--hemoprotein reductase] + 4 H2O + 4 H(+). It carries out the reaction androst-4-ene-3,17-dione + 3 reduced [NADPH--hemoprotein reductase] + 3 O2 = estrone + formate + 3 oxidized [NADPH--hemoprotein reductase] + 4 H2O + 4 H(+). It catalyses the reaction androst-4-ene-3,17-dione + reduced [NADPH--hemoprotein reductase] + O2 = 19-hydroxyandrost-4-ene-3,17-dione + oxidized [NADPH--hemoprotein reductase] + H2O + H(+). The enzyme catalyses 19-hydroxyandrost-4-ene-3,17-dione + reduced [NADPH--hemoprotein reductase] + O2 = 19-oxo-androst-4-ene-3,17-dione + oxidized [NADPH--hemoprotein reductase] + 2 H2O + H(+). The catalysed reaction is 19-oxo-androst-4-ene-3,17-dione + reduced [NADPH--hemoprotein reductase] + O2 = estrone + formate + oxidized [NADPH--hemoprotein reductase] + H2O + 2 H(+). It carries out the reaction estrone + reduced [NADPH--hemoprotein reductase] + O2 = 2-hydroxyestrone + oxidized [NADPH--hemoprotein reductase] + H2O + H(+). It catalyses the reaction 17beta-hydroxy-5alpha-androstan-3-one + reduced [NADPH--hemoprotein reductase] + O2 = 17beta,19-dihydroxy-3-oxo-5alpha-androstanone + oxidized [NADPH--hemoprotein reductase] + H2O + H(+). The enzyme catalyses 17beta,19-dihydroxy-3-oxo-5alpha-androstanone + reduced [NADPH--hemoprotein reductase] + O2 = 17beta-hydroxy-3,19-dioxo-5alpha-androstanone + oxidized [NADPH--hemoprotein reductase] + 2 H2O + H(+). The catalysed reaction is 17beta-hydroxy-3,19-dioxo-5alpha-androstanone + reduced [NADPH--hemoprotein reductase] + O2 = 17beta-hydroxy-3-oxo-19-nor-5alpha-androst-1-ene + formate + oxidized [NADPH--hemoprotein reductase] + H2O + 2 H(+). The protein operates within steroid hormone biosynthesis. In terms of biological role, a cytochrome P450 monooxygenase that catalyzes the conversion of C19 androgens, androst-4-ene-3,17-dione (androstenedione) and testosterone to the C18 estrogens, estrone and estradiol, respectively. Catalyzes three successive oxidations of C19 androgens: two conventional oxidations at C19 yielding 19-hydroxy and 19-oxo/19-aldehyde derivatives, followed by a third oxidative aromatization step that involves C1-beta hydrogen abstraction combined with cleavage of the C10-C19 bond to yield a phenolic A ring and formic acid. Alternatively, the third oxidative reaction yields a 19-norsteroid and formic acid. Converts dihydrotestosterone to delta1,10-dehydro 19-nordihydrotestosterone and may play a role in homeostasis of this potent androgen. Also displays 2-hydroxylase activity toward estrone. Mechanistically, uses molecular oxygen inserting one oxygen atom into a substrate, and reducing the second into a water molecule, with two electrons provided by NADPH via cytochrome P450 reductase (CPR; NADPH-ferrihemoprotein reductase). This chain is Aromatase (CYP19A1), found in Canis lupus familiaris (Dog).